Here is a 78-residue protein sequence, read N- to C-terminus: Probable [Fe-S]-dependent transcriptional repressor (78 aa).

4 residues coordinate iron-sulfur cluster: Cys-56, Cys-61, Cys-64, and Cys-70.

The protein belongs to the FeoC family.

Functionally, may function as a transcriptional regulator that controls feoABC expression. The chain is Probable [Fe-S]-dependent transcriptional repressor from Escherichia coli O127:H6 (strain E2348/69 / EPEC).